We begin with the raw amino-acid sequence, 616 residues long: ATP-dependent zinc metalloprotease FtsH 3 (616 aa).

Over 1–9 (MSKNNKKWR) the chain is Cytoplasmic. The chain crosses the membrane as a helical span at residues 10-30 (NAGLYALLLIVVLALASAFFD). The Lumenal portion of the chain corresponds to 31–108 (RPTQTRETLS…VQPQSDEGFW (78 aa)). The helical transmembrane segment at 109-129 (FRIASTLFLPILLLVGIFFLF) threads the bilayer. The Cytoplasmic segment spans residues 130-616 (RRAQSGPGSQ…NNNAKLALLV (487 aa)). Residue 201–208 (GPPGTGKT) coordinates ATP. His-423 is a binding site for Zn(2+). Glu-424 is an active-site residue. Positions 427 and 504 each coordinate Zn(2+).

This sequence in the central section; belongs to the AAA ATPase family. In the C-terminal section; belongs to the peptidase M41 family. In terms of assembly, homohexamer (Potential). Part of a large complex that includes FtsH2 and PSII. Coimmunoprecipitates with YidC. It depends on Zn(2+) as a cofactor.

The protein localises to the cellular thylakoid membrane. Acts as a processive, ATP-dependent zinc metallopeptidase for both cytoplasmic and membrane proteins. Plays a role in the quality control of integral membrane proteins. The chain is ATP-dependent zinc metalloprotease FtsH 3 from Synechocystis sp. (strain ATCC 27184 / PCC 6803 / Kazusa).